The chain runs to 278 residues: ADP-dependent (S)-NAD(P)H-hydrate dehydratase (278 aa).

The YjeF C-terminal domain occupies 4–276 (DDDLVRQVIR…KAIPSWMKKL (273 aa)). Positions 39, 102, and 152 each coordinate (6S)-NADPHX. Gly-216 contributes to the AMP binding site. Position 217 (Asp-217) interacts with (6S)-NADPHX.

The protein belongs to the NnrD/CARKD family. In terms of assembly, homotetramer. It depends on Mg(2+) as a cofactor.

It catalyses the reaction (6S)-NADHX + ADP = AMP + phosphate + NADH + H(+). The catalysed reaction is (6S)-NADPHX + ADP = AMP + phosphate + NADPH + H(+). Catalyzes the dehydration of the S-form of NAD(P)HX at the expense of ADP, which is converted to AMP. Together with NAD(P)HX epimerase, which catalyzes the epimerization of the S- and R-forms, the enzyme allows the repair of both epimers of NAD(P)HX, a damaged form of NAD(P)H that is a result of enzymatic or heat-dependent hydration. The polypeptide is ADP-dependent (S)-NAD(P)H-hydrate dehydratase (Streptococcus thermophilus).